A 128-amino-acid polypeptide reads, in one-letter code: Disintegrin EO4A (128 aa).

Positions 1–20 (MIPVLLVTICLAVFPFQGSS) are cleaved as a signal peptide. Positions 21-47 (IILESGNINDYEIVYPKKVNVLPTGAM) are excised as a propeptide. One can recognise a Disintegrin domain in the interval 26–112 (GNINDYEIVY…DCPRNPYKGK (87 aa)). 4 disulfide bridges follow: Cys-53–Cys-76, Cys-67–Cys-73, Cys-72–Cys-97, and Cys-85–Cys-104. A Cell attachment site motif is present at residues 89-91 (RGD). A propeptide spanning residues 115 to 128 (PMKWPAAAKGSVLM) is cleaved from the precursor.

It belongs to the disintegrin family. Dimeric disintegrin subfamily. In terms of assembly, heterodimer with EO5B; disulfide-linked. Expressed by the venom gland.

The protein resides in the secreted. Poor inhibitor of platelet aggregation. The disintegrin inhibits the adhesion of cells expressing the RGD-dependent integrin alpha-5/beta-1 (ITGA5/ITGB1) to immobilized fibronectin. Inhibition on alpha-2b/beta-3 (ITGA2B/ITGB3) is low. This chain is Disintegrin EO4A, found in Echis ocellatus (Ocellated saw-scaled viper).